The sequence spans 443 residues: Serine/threonine-protein kinase SSN3 (443 aa).

The tract at residues 1-24 is disordered; that stretch reads MERKRGREMNPPSADPPSATPVAR. The region spanning 54–384 is the Protein kinase domain; that stretch reads YKIVGFISSG…AEKALEHRYF (331 aa). Residues 60–68 and lysine 84 each bind ATP; that span reads ISSGTYGRV. The Proton acceptor role is filled by aspartate 185. The segment at 405 to 443 is disordered; the sequence is RRVSQEDNDIRTSSLPGTKRSGLPDDSLMGRPAKRLKEG.

It belongs to the protein kinase superfamily. CMGC Ser/Thr protein kinase family. CDC2/CDKX subfamily. Component of the srb8-11 complex, a regulatory module of the Mediator complex. It depends on Mg(2+) as a cofactor.

The protein localises to the nucleus. It catalyses the reaction L-seryl-[protein] + ATP = O-phospho-L-seryl-[protein] + ADP + H(+). The enzyme catalyses L-threonyl-[protein] + ATP = O-phospho-L-threonyl-[protein] + ADP + H(+). The catalysed reaction is [DNA-directed RNA polymerase] + ATP = phospho-[DNA-directed RNA polymerase] + ADP + H(+). Functionally, component of the srb8-11 complex. The srb8-11 complex is a regulatory module of the Mediator complex which is itself dependent transcription. The srb8-11 complex may be involved in the transcriptional repression of a subset of genes regulated by Mediator. It may inhibit the association of the Mediator complex with RNA polymerase II to form the holoenzyme complex. The srb8-11 complex phosphorylates the C-terminal domain (CTD) of the largest subunit of RNA polymerase II. This Phaeosphaeria nodorum (strain SN15 / ATCC MYA-4574 / FGSC 10173) (Glume blotch fungus) protein is Serine/threonine-protein kinase SSN3 (SSN3).